A 432-amino-acid polypeptide reads, in one-letter code: 5-methylthioadenosine/S-adenosylhomocysteine deaminase (432 aa).

Zn(2+) is bound by residues His-62 and His-64. Residues Glu-91 and His-184 each coordinate substrate. His-211 provides a ligand contact to Zn(2+). Substrate contacts are provided by Glu-214 and Asp-299. Position 299 (Asp-299) interacts with Zn(2+).

Belongs to the metallo-dependent hydrolases superfamily. MTA/SAH deaminase family. Zn(2+) is required as a cofactor.

The enzyme catalyses S-adenosyl-L-homocysteine + H2O + H(+) = S-inosyl-L-homocysteine + NH4(+). The catalysed reaction is S-methyl-5'-thioadenosine + H2O + H(+) = S-methyl-5'-thioinosine + NH4(+). Functionally, catalyzes the deamination of 5-methylthioadenosine and S-adenosyl-L-homocysteine into 5-methylthioinosine and S-inosyl-L-homocysteine, respectively. Is also able to deaminate adenosine. The protein is 5-methylthioadenosine/S-adenosylhomocysteine deaminase of Haloarcula marismortui (strain ATCC 43049 / DSM 3752 / JCM 8966 / VKM B-1809) (Halobacterium marismortui).